The following is a 579-amino-acid chain: Probable pectinesterase/pectinesterase inhibitor 7 (579 aa).

The N-terminal stretch at 1 to 20 (MESPIFILITLSFFLQSVLA) is a signal peptide. Positions 22 to 185 (SQTLSNSSTI…TKLLGVSLAL (164 aa)) are pectinesterase inhibitor 7. Residues Asn-27, Asn-115, Asn-174, Asn-274, Asn-277, Asn-287, Asn-326, and Asn-333 are each glycosylated (N-linked (GlcNAc...) asparagine). The pectinesterase 7 stretch occupies residues 265 to 564 (VTVSQDGTGN…TVTGLFIEAD (300 aa)). Thr-342 is a substrate binding site. Asn-359 carries an N-linked (GlcNAc...) asparagine glycan. Gln-372 contacts substrate. The Proton donor; for pectinesterase activity role is filled by Asp-395. A disulfide bridge connects residues Cys-409 and Cys-429. Asp-416 serves as the catalytic Nucleophile; for pectinesterase activity. N-linked (GlcNAc...) asparagine glycans are attached at residues Asn-462 and Asn-475. Substrate-binding residues include Arg-484 and Trp-486. 4 N-linked (GlcNAc...) asparagine glycosylation sites follow: Asn-526, Asn-533, Asn-547, and Asn-553.

It in the N-terminal section; belongs to the PMEI family. The protein in the C-terminal section; belongs to the pectinesterase family. As to expression, expressed in siliques.

The protein resides in the secreted. Its subcellular location is the cell wall. The catalysed reaction is [(1-&gt;4)-alpha-D-galacturonosyl methyl ester](n) + n H2O = [(1-&gt;4)-alpha-D-galacturonosyl](n) + n methanol + n H(+). Its pathway is glycan metabolism; pectin degradation; 2-dehydro-3-deoxy-D-gluconate from pectin: step 1/5. Acts in the modification of cell walls via demethylesterification of cell wall pectin. In Arabidopsis thaliana (Mouse-ear cress), this protein is Probable pectinesterase/pectinesterase inhibitor 7 (PME7).